A 589-amino-acid polypeptide reads, in one-letter code: Isocitrate dehydrogenase kinase/phosphatase (589 aa).

ATP-binding positions include 322–328 (APGIRGL) and K343. D378 is an active-site residue.

It belongs to the AceK family.

The protein resides in the cytoplasm. The catalysed reaction is L-seryl-[isocitrate dehydrogenase] + ATP = O-phospho-L-seryl-[isocitrate dehydrogenase] + ADP + H(+). Its function is as follows. Bifunctional enzyme which can phosphorylate or dephosphorylate isocitrate dehydrogenase (IDH) on a specific serine residue. This is a regulatory mechanism which enables bacteria to bypass the Krebs cycle via the glyoxylate shunt in response to the source of carbon. When bacteria are grown on glucose, IDH is fully active and unphosphorylated, but when grown on acetate or ethanol, the activity of IDH declines drastically concomitant with its phosphorylation. This chain is Isocitrate dehydrogenase kinase/phosphatase, found in Azoarcus sp. (strain BH72).